The chain runs to 145 residues: Small ribosomal subunit protein uS9 (145 aa).

The span at 1–13 shows a compositional bias: polar residues; that stretch reads MATDQHSNKSNVS. A disordered region spans residues 1 to 24; that stretch reads MATDQHSNKSNVSAARKPLSPSPT.

The protein belongs to the universal ribosomal protein uS9 family.

It is found in the cytoplasm. The sequence is that of Small ribosomal subunit protein uS9 (RPS16) from Lupinus polyphyllus (Large-leaved lupine).